We begin with the raw amino-acid sequence, 500 residues long: Cysteine--tRNA ligase (500 aa).

C29 is a binding site for Zn(2+). Residues 31 to 41 (VTVYDLCHLGH) carry the 'HIGH' region motif. Residues C213, H238, and E242 each contribute to the Zn(2+) site. Positions 270 to 274 (KMSKS) match the 'KMSKS' region motif. K273 contributes to the ATP binding site.

It belongs to the class-I aminoacyl-tRNA synthetase family. Monomer. It depends on Zn(2+) as a cofactor.

It localises to the cytoplasm. The catalysed reaction is tRNA(Cys) + L-cysteine + ATP = L-cysteinyl-tRNA(Cys) + AMP + diphosphate. The protein is Cysteine--tRNA ligase of Prochlorococcus marinus (strain NATL1A).